A 173-amino-acid polypeptide reads, in one-letter code: Trafficking regulator of GLUT4 1 (173 aa).

Polar residues predominate over residues 1 to 17 (MANPVQPQLQDPGSTSP). A disordered region spans residues 1-22 (MANPVQPQLQDPGSTSPLDLPE). At 1-102 (MANPVQPQLQ…QDQEAPKDYL (102 aa)) the chain is on the cytoplasmic side. Serine 16, serine 43, serine 45, serine 70, serine 84, and serine 85 each carry phosphoserine. Positions 103–123 (VLAIASCFCPVWPLNLIPLIF) form an intramembrane region, helical. Residues 124–150 (SIMSRSSVQQGDLDGARRLGRLARLLS) lie on the Cytoplasmic side of the membrane. The chain crosses the membrane as a helical span at residues 151–171 (ITFIILGIVIIIVAVTVNFTV). The Extracellular segment spans residues 172-173 (PK).

The protein belongs to the CD225/Dispanin family. Interacts with SLC2A4; the interaction is required for proper SLC2A4 reacycling after insulin stimulation. Present in adipose tissue and undetectable in other tissues (at protein level).

The protein resides in the cell membrane. It is found in the endomembrane system. It localises to the cytoplasm. Its subcellular location is the perinuclear region. Functionally, regulates insulin-mediated adipose tissue glucose uptake and transport by modulation of SLC2A4 recycling. Not required for SLC2A4 membrane fusion upon an initial stimulus, but rather is necessary for proper protein recycling during prolonged insulin stimulation. The polypeptide is Trafficking regulator of GLUT4 1 (Rattus norvegicus (Rat)).